We begin with the raw amino-acid sequence, 625 residues long: MNAAPTVLLQQTQTLSAAVTQPIPGSRKIFVQGSRADLQVPMREIVLTRTPTLFGGQDNPPLSVYDTSGPYTDPQAAIDLAAGLAPLRADWIAERGDTLPLEALSSSFGRGREHDARLDAVRFPSRRLPRVARSGANVTQMHYARRGIITPEMEFVAIRENQRLEAVTDAVLRKQHPGEAFGAAIQQRITPEFVREEIARGRAILPNNINHPESEPMIIGRNFLTKINANIGNSAVSSGIAEEVEKLVWSIRWGGDTVMDLSTGKHIHETRDWIIRNSPVPIGTVPIYQALEKVDGRAEELTWEIFRDTLIEQAEQGVDYFTIHAGVLLRYVPLTARRVTGIVSRGGSILAKWCLAHHKENFLYTHFEDICEIMKAYDVAFSLGDGLRPGCIADANDAAQFGELETLGELTKLAWKHDVQTMIEGPGHVPMQLIKENMDKQLRECGEAPFYTLGPLTTDIAPGYDHITSAIGAAMIGWFGTAMLCYVTPKEHLGLPNRQDVRDGIMAYKIAAHAADLAKGHPGVQVRDNALSKARFEFRWDDQFHLGLDPEKAKEFHDETLPKDAHKLAHFCSMCGPHFCSMKITQDVRDYAAEHGISEDHALEAGMQEKSGEFVAQGAQVYRAS.

Substrate-binding positions include asparagine 230, methionine 259, tyrosine 288, histidine 324, 344–346, 385–388, and glutamate 424; these read SRG and DGLR. Histidine 428 provides a ligand contact to Zn(2+). Residue tyrosine 451 participates in substrate binding. Zn(2+) is bound at residue histidine 492. Positions 572, 575, and 580 each coordinate [4Fe-4S] cluster.

This sequence belongs to the ThiC family. As to quaternary structure, homodimer. [4Fe-4S] cluster is required as a cofactor.

The catalysed reaction is 5-amino-1-(5-phospho-beta-D-ribosyl)imidazole + S-adenosyl-L-methionine = 4-amino-2-methyl-5-(phosphooxymethyl)pyrimidine + CO + 5'-deoxyadenosine + formate + L-methionine + 3 H(+). It functions in the pathway cofactor biosynthesis; thiamine diphosphate biosynthesis. In terms of biological role, catalyzes the synthesis of the hydroxymethylpyrimidine phosphate (HMP-P) moiety of thiamine from aminoimidazole ribotide (AIR) in a radical S-adenosyl-L-methionine (SAM)-dependent reaction. The chain is Phosphomethylpyrimidine synthase from Xanthomonas campestris pv. campestris (strain 8004).